The primary structure comprises 635 residues: Threonine--tRNA ligase (635 aa).

In terms of domain architecture, TGS spans 1–61 (MVSIRLPDGS…DHDVALAIVT (61 aa)). The segment at 242 to 533 (DHRKLGKQLD…LIEHHAGAMP (292 aa)) is catalytic. Zn(2+) contacts are provided by cysteine 333, histidine 384, and histidine 510.

The protein belongs to the class-II aminoacyl-tRNA synthetase family. As to quaternary structure, homodimer. It depends on Zn(2+) as a cofactor.

Its subcellular location is the cytoplasm. It carries out the reaction tRNA(Thr) + L-threonine + ATP = L-threonyl-tRNA(Thr) + AMP + diphosphate + H(+). In terms of biological role, catalyzes the attachment of threonine to tRNA(Thr) in a two-step reaction: L-threonine is first activated by ATP to form Thr-AMP and then transferred to the acceptor end of tRNA(Thr). Also edits incorrectly charged L-seryl-tRNA(Thr). This chain is Threonine--tRNA ligase, found in Paraburkholderia xenovorans (strain LB400).